Consider the following 355-residue polypeptide: C-C chemokine receptor type 3 (355 aa).

At 1-34 (MTTSLDTVETFGPTSYDDDMGLLCEKADVGALIA) the chain is on the extracellular side. Residues 35–62 (QFVPPLYSLVFMVGLLGNVVVVMILIKY) form a helical membrane-spanning segment. Over 63–72 (RRLRIMTNIY) the chain is Cytoplasmic. Residues 73 to 93 (LLNLAISDLLFLFTLPFWIHY) traverse the membrane as a helical segment. Topologically, residues 94 to 107 (VRERNWVFSHGMCK) are extracellular. Cys106 and Cys183 form a disulfide bridge. A helical transmembrane segment spans residues 108–129 (VLSGFYHTGLYSEIFFIILLTI). Residues 130-146 (DRYLAIVHAVFALRART) are Cytoplasmic-facing. Residues 147 to 171 (VTFGVITSIVTWGLAVLAALPEFIF) form a helical membrane-spanning segment. Residues 172 to 203 (YGTEKLFPKTLCSAIYPQDTVYSWRHFHTLKM) lie on the Extracellular side of the membrane. The chain crosses the membrane as a helical span at residues 204 to 223 (TILCLALPLLVMAICYTGII). At 224-239 (KTLLRCPSKKKYKAIR) the chain is on the cytoplasmic side. A helical transmembrane segment spans residues 240 to 264 (LIFVIMAVFFIFWTPYNVAILISTY). Topologically, residues 265–281 (QSVLFGLDCERSKHLDL) are extracellular. The chain crosses the membrane as a helical span at residues 282–305 (FVLATEVIAYSHCCVNPVIYAFVG). Residues 306-355 (ERFRKYLRHFFHRHVLMHLGKYIPFLPSEKLERTSSVSPSTAEPELSIVF) are Cytoplasmic-facing.

The protein belongs to the G-protein coupled receptor 1 family.

It is found in the cell membrane. Receptor for C-C type chemokine. Binds and responds to a variety of chemokines, including CCL11, CCL26, CCL7, CCL13, RANTES(CCL5) and CCL15. Subsequently transduces a signal by increasing the intracellular calcium ions level. In addition acts as a possible functional receptor for NARS1. The chain is C-C chemokine receptor type 3 (CCR3) from Macaca mulatta (Rhesus macaque).